The sequence spans 369 residues: Anhydro-N-acetylmuramic acid kinase (369 aa).

ATP is bound at residue 12 to 19 (GTSMDGVD).

The protein belongs to the anhydro-N-acetylmuramic acid kinase family.

The catalysed reaction is 1,6-anhydro-N-acetyl-beta-muramate + ATP + H2O = N-acetyl-D-muramate 6-phosphate + ADP + H(+). It participates in amino-sugar metabolism; 1,6-anhydro-N-acetylmuramate degradation. Its pathway is cell wall biogenesis; peptidoglycan recycling. In terms of biological role, catalyzes the specific phosphorylation of 1,6-anhydro-N-acetylmuramic acid (anhMurNAc) with the simultaneous cleavage of the 1,6-anhydro ring, generating MurNAc-6-P. Is required for the utilization of anhMurNAc either imported from the medium or derived from its own cell wall murein, and thus plays a role in cell wall recycling. In Shewanella baltica (strain OS155 / ATCC BAA-1091), this protein is Anhydro-N-acetylmuramic acid kinase.